The primary structure comprises 458 residues: Phosphoglucosamine mutase (458 aa).

Residue Ser-100 is the Phosphoserine intermediate of the active site. Ser-100, Asp-254, Asp-256, and Asp-258 together coordinate Mg(2+). At Ser-100 the chain carries Phosphoserine.

Belongs to the phosphohexose mutase family. It depends on Mg(2+) as a cofactor. Post-translationally, activated by phosphorylation.

It catalyses the reaction alpha-D-glucosamine 1-phosphate = D-glucosamine 6-phosphate. Functionally, catalyzes the conversion of glucosamine-6-phosphate to glucosamine-1-phosphate. The sequence is that of Phosphoglucosamine mutase from Nocardia farcinica (strain IFM 10152).